The chain runs to 423 residues: ER-bound oxygenase mpaB' (423 aa).

Over 1–22 (MSLSLPPALSELARALPYSRTQ) the chain is Lumenal. Residues 23 to 41 (WLPILVGFLIGYPLLIKAL) form a helical membrane-spanning segment. At 42–423 (RYKRLGEMKK…ISRTGKCPFH (382 aa)) the chain is on the cytoplasmic side.

It belongs to the mpaB oxygenase family.

The protein resides in the endoplasmic reticulum membrane. It catalyses the reaction 4-farnesyl-3,5-dihydroxy-6-methylphthalide + AH2 + 2 O2 = (4E,8E)-10-(4,6-dihydroxy-7-methyl-3-oxo-1,3-dihydro-2-benzofuran-5-yl)-4,8-dimethyldeca-4,8-dienoate + acetone + A + H2O + H(+). Its pathway is secondary metabolite biosynthesis; terpenoid biosynthesis. Its function is as follows. ER-bound oxygenase; part of the gene cluster that mediates the biosynthesis of mycophenolic acid (MPA), the first isolated antibiotic natural product in the world obtained from a culture of Penicillium brevicompactum in 1893. MpaB' catalyzes the oxidative cleavage the C19-C20 double bond in farnesyl-DHMP (FDHMP) to yield FDHMP-3C via a mycophenolic aldehyde intermediate. The first step of the pathway is the synthesis of 5-methylorsellinic acid (5MOA) by the cytosolic polyketide synthase mpaC. 5MOA is then converted to the phthalide compound 5,7-dihydroxy-4,6-dimethylphthalide (DHMP) by the endoplasmic reticulum-bound cytochrome P450 monooxygenase mpaDE. MpaDE first catalyzes hydroxylation of 5-MOA to 4,6-dihydroxy-2-(hydroxymethyl)-3-methylbenzoic acid (DHMB). MpaDE then acts as a lactone synthase that catalyzes the ring closure to convert DHMB into DHMP. The next step is the prenylation of DHMP by the Golgi apparatus-associated prenyltransferase mpaA to yield farnesyl-DHMP (FDHMP). The ER-bound oxygenase mpaB then mediates the oxidative cleavage the C19-C20 double bond in FDHMP to yield FDHMP-3C via a mycophenolic aldehyde intermediate. The O-methyltransferase mpaG catalyzes the methylation of FDHMP-3C to yield MFDHMP-3C. After the cytosolic methylation of FDHMP-3C, MFDHMP-3C enters into peroxisomes probably via free diffusion due to its low molecular weight. Upon a peroxisomal CoA ligation reaction, catalyzed by a beta-oxidation component enzyme acyl-CoA ligase ACL891, MFDHMP-3C-CoA would then be restricted to peroxisomes for the following beta-oxidation pathway steps. The peroxisomal beta-oxidation machinery than converts MFDHMP-3C-CoA into MPA_CoA, via a beta-oxidation chain-shortening process. Finally mpaH acts as a peroxisomal acyl-CoA hydrolase with high substrate specificity toward MPA-CoA to release the final product MPA. In Penicillium brevicompactum, this protein is ER-bound oxygenase mpaB'.